Reading from the N-terminus, the 495-residue chain is Aspartyl/glutamyl-tRNA(Asn/Gln) amidotransferase subunit B (495 aa).

This sequence belongs to the GatB/GatE family. GatB subfamily. In terms of assembly, heterotrimer of A, B and C subunits.

The enzyme catalyses L-glutamyl-tRNA(Gln) + L-glutamine + ATP + H2O = L-glutaminyl-tRNA(Gln) + L-glutamate + ADP + phosphate + H(+). The catalysed reaction is L-aspartyl-tRNA(Asn) + L-glutamine + ATP + H2O = L-asparaginyl-tRNA(Asn) + L-glutamate + ADP + phosphate + 2 H(+). Its function is as follows. Allows the formation of correctly charged Asn-tRNA(Asn) or Gln-tRNA(Gln) through the transamidation of misacylated Asp-tRNA(Asn) or Glu-tRNA(Gln) in organisms which lack either or both of asparaginyl-tRNA or glutaminyl-tRNA synthetases. The reaction takes place in the presence of glutamine and ATP through an activated phospho-Asp-tRNA(Asn) or phospho-Glu-tRNA(Gln). This Crocosphaera subtropica (strain ATCC 51142 / BH68) (Cyanothece sp. (strain ATCC 51142)) protein is Aspartyl/glutamyl-tRNA(Asn/Gln) amidotransferase subunit B.